The following is a 435-amino-acid chain: Adenylosuccinate lyase (435 aa).

N(6)-(1,2-dicarboxyethyl)-AMP is bound by residues 4–5 (RY), 73–75 (RHD), and 99–100 (TS). The active-site Proton donor/acceptor is the histidine 147. Position 218 (glutamine 218) interacts with N(6)-(1,2-dicarboxyethyl)-AMP. Residue serine 268 is the Proton donor/acceptor of the active site. Residues serine 269, 274–276 (KKN), asparagine 282, and 313–317 (SAERV) each bind N(6)-(1,2-dicarboxyethyl)-AMP.

This sequence belongs to the lyase 1 family. Adenylosuccinate lyase subfamily. As to quaternary structure, homotetramer. Residues from neighboring subunits contribute catalytic and substrate-binding residues to each active site.

The catalysed reaction is N(6)-(1,2-dicarboxyethyl)-AMP = fumarate + AMP. It catalyses the reaction (2S)-2-[5-amino-1-(5-phospho-beta-D-ribosyl)imidazole-4-carboxamido]succinate = 5-amino-1-(5-phospho-beta-D-ribosyl)imidazole-4-carboxamide + fumarate. It participates in purine metabolism; AMP biosynthesis via de novo pathway; AMP from IMP: step 2/2. It functions in the pathway purine metabolism; IMP biosynthesis via de novo pathway; 5-amino-1-(5-phospho-D-ribosyl)imidazole-4-carboxamide from 5-amino-1-(5-phospho-D-ribosyl)imidazole-4-carboxylate: step 2/2. Catalyzes two reactions in de novo purine nucleotide biosynthesis. Catalyzes the breakdown of 5-aminoimidazole- (N-succinylocarboxamide) ribotide (SAICAR or 2-[5-amino-1-(5-phospho-beta-D-ribosyl)imidazole-4-carboxamido]succinate) to 5-aminoimidazole-4-carboxamide ribotide (AICAR or 5-amino-1-(5-phospho-beta-D-ribosyl)imidazole-4-carboxamide) and fumarate, and of adenylosuccinate (ADS or N(6)-(1,2-dicarboxyethyl)-AMP) to adenosine monophosphate (AMP) and fumarate. This is Adenylosuccinate lyase (purB) from Deinococcus radiodurans (strain ATCC 13939 / DSM 20539 / JCM 16871 / CCUG 27074 / LMG 4051 / NBRC 15346 / NCIMB 9279 / VKM B-1422 / R1).